The chain runs to 305 residues: tRNA pseudouridine synthase B (305 aa).

Residue D39 is the Nucleophile of the active site.

Belongs to the pseudouridine synthase TruB family. Type 1 subfamily.

It catalyses the reaction uridine(55) in tRNA = pseudouridine(55) in tRNA. Responsible for synthesis of pseudouridine from uracil-55 in the psi GC loop of transfer RNAs. The protein is tRNA pseudouridine synthase B of Staphylococcus aureus (strain MRSA252).